Consider the following 332-residue polypeptide: Apoptosis-enhancing nuclease (332 aa).

Residues 1–102 (MVPREVPESS…VPREAPSSGP (102 aa)) form a disordered region. The segment covering 20-36 (ARRRHKRRSRQHQRFMA) has biased composition (basic residues). A Nucleolar localization signal motif is present at residues 21-29 (RRRHKRRSR). Residues 63–73 (QTPAGTEASGN) are compositionally biased toward polar residues. Residues 105–261 (YVAIDCEMVG…EDAMTAMELY (157 aa)) form the Exonuclease domain. The Nuclear localization signal signature appears at 160-183 (RQHMHKAIPFQVAQKEILKLLKGK). The segment at 272–332 (VASTAKAHPE…EGQGARSAPP (61 aa)) is disordered. A compositionally biased stretch (basic and acidic residues) spans 310–321 (GDTREAQDRQEG).

It localises to the nucleus. It is found in the nucleolus. Its function is as follows. Exonuclease with activity against single- and double-stranded DNA and RNA. Mediates p53-induced apoptosis. When induced by p53 following DNA damage, digests double-stranded DNA to form single-stranded DNA and amplifies DNA damage signals, leading to enhancement of apoptosis. The protein is Apoptosis-enhancing nuclease of Rattus norvegicus (Rat).